A 139-amino-acid chain; its full sequence is Actin-depolymerizing factor 6 (139 aa).

One can recognise an ADF-H domain in the interval 5–139; that stretch reads ASGMAVGDEC…SMDIVKARAL (135 aa).

Belongs to the actin-binding proteins ADF family.

Its function is as follows. Actin-depolymerizing protein. Severs actin filaments (F-actin) and binds to actin monomers. In Oryza sativa subsp. japonica (Rice), this protein is Actin-depolymerizing factor 6 (ADF6).